A 1648-amino-acid polypeptide reads, in one-letter code: eIF-2-alpha kinase GCN2 (1648 aa).

Positions 1–26 (MAGGRGASGRGRAEPQESYSQRQDHE) are disordered. In terms of domain architecture, RWD spans 25–137 (HELQALEAIY…HHVQSFLSEH (113 aa)). The stretch at 146-205 (HEEMLERQAQEKQQRLLEARRKEEQEQREILHEIQRRKEEIKEEKKRKEMAKQERLEITS) forms a coiled coil. Ser-230 carries the phosphoserine modification. Protein kinase domains follow at residues 286–538 (VGSD…HSFI) and 589–1000 (FEEL…SELL). ATP-binding positions include 595-603 (LGKGAFGAV) and Lys-618. The segment at 661–784 (PAVPGTPPPD…CNQKDGSHEI (124 aa)) is disordered. Phosphothreonine is present on Thr-666. Composition is skewed to polar residues over residues 673 to 686 (PQAQDSPATCGKTS) and 704 to 722 (LSSSVEWSTSAERSTSTRF). 2 stretches are compositionally biased toward acidic residues: residues 730-739 (SSDEEDEDER) and 753-763 (SDSDIIFDNED). A compositionally biased stretch (basic and acidic residues) spans 775–784 (CNQKDGSHEI). Catalysis depends on Asp-846, which acts as the Proton acceptor. At Thr-869 the chain carries Phosphothreonine. Residues Thr-898 and Thr-903 each carry the phosphothreonine; by autocatalysis modification. The interval 1021–1492 (IDGKAYRTMM…DHVMQKLRTK (472 aa)) is histidyl-tRNA synthetase-like. Lys-1258 is subject to N6-acetyllysine.

It belongs to the protein kinase superfamily. Ser/Thr protein kinase family. GCN2 subfamily. In terms of assembly, homodimer; homodimerization is important for kinase activation by uncharged tRNAs. Interacts with GCN1; this interaction stimulates EIF2AK4/GCN2 kinase activity and is impaired by IMPACT upon a variety of stress conditions, such as amino acid depletion, UV-C irradiation, proteasome inhibitor treatment and glucose deprivation. Interacts with DNAJC3; this interaction inhibits EIF2AK4/GCN2 kinase activity during endoplasmic reticulum (ER), hypothermic and amino acid-starving stress conditions. Interacts with MAP3K20; activates EIF2AK4/GCN2 kinase activity in response to moderate ribotoxic stress. In terms of processing, autophosphorylated; autophosphorylation on Thr-898 is increased upon amino acid starvation and in UV irradiation cells and inhibited in presence of IMPACT. As to expression, expressed in liver. Expressed predominantly in the hippocampal CA1 region and the dentate gyrus, and to a lesser degree in CA3 (at protein level). Expressed in liver, lung, brain, kidney, skeletal muscle and testis. Expressed weakly in heart and spleen. Expressed in the hippocampal CA1 and CA3 regions, the dentate gyrus and cerebellum. Isoform 1 is widely expressed. Isoform 1 is expressed in brain, liver, skeletal muscle and testis. Isoform 3 is expressed in lung, brain, testis, prostate and choroid plexus. Isoform 4 is expressed in muscle, lung, kidney, brain, testis and prostate.

The protein resides in the cytoplasm. It catalyses the reaction L-seryl-[protein] + ATP = O-phospho-L-seryl-[protein] + ADP + H(+). The catalysed reaction is L-threonyl-[protein] + ATP = O-phospho-L-threonyl-[protein] + ADP + H(+). Its activity is regulated as follows. (Microbial infection) Kinase activity is enhanced by alphavirus genomic RNA sequences. Kinase activity is stimulated upon binding to uncharged tRNAs. Activated by serum starvation (in vitro). Metabolic-stress sensing protein kinase that phosphorylates the alpha subunit of eukaryotic translation initiation factor 2 (EIF2S1/eIF-2-alpha) in response to low amino acid availability. Plays a role as an activator of the integrated stress response (ISR) required for adaptation to amino acid starvation. EIF2S1/eIF-2-alpha phosphorylation in response to stress converts EIF2S1/eIF-2-alpha into a global protein synthesis inhibitor, leading to a global attenuation of cap-dependent translation, and thus to a reduced overall utilization of amino acids, while concomitantly initiating the preferential translation of ISR-specific mRNAs, such as the transcriptional activator ATF4, and hence allowing ATF4-mediated reprogramming of amino acid biosynthetic gene expression to alleviate nutrient depletion. Required for the translational induction of protein kinase PRKCH following amino acid starvation. Binds uncharged tRNAs. Involved in cell cycle arrest by promoting cyclin D1 mRNA translation repression after the unfolded protein response pathway (UPR) activation or cell cycle inhibitor CDKN1A/p21 mRNA translation activation in response to amino acid deprivation. Plays a role in the consolidation of synaptic plasticity, learning as well as formation of long-term memory. Plays a role in neurite outgrowth inhibition. Plays a role in feeding behavior to maintain amino acid homeostasis; contributes to the innate aversion toward diets of imbalanced amino acid composition. Plays a proapoptotic role in response to glucose deprivation. Promotes global cellular protein synthesis repression in response to UV irradiation independently of the stress-activated protein kinase/c-Jun N-terminal kinase (SAPK/JNK) and p38 MAPK signaling pathways. Its function is as follows. (Microbial infection) Plays a role in the antiviral response against alphavirus infection; impairs early viral mRNA translation of the incoming genomic virus RNA, thus preventing alphavirus replication. Functionally, (Microbial infection) Plays a role in modulating the adaptive immune response to Yellow fever virus infection; promotes dendritic cells to initiate autophagy and antigene presentation to both CD4(+) and CD8(+) T-cells under amino acid starvation. The chain is eIF-2-alpha kinase GCN2 from Mus musculus (Mouse).